A 173-amino-acid chain; its full sequence is NADH-quinone oxidoreductase subunit 6 (173 aa).

The [4Fe-4S] cluster site is built by cysteine 53, cysteine 54, cysteine 118, and cysteine 148.

This sequence belongs to the complex I 20 kDa subunit family. NDH-1 is composed of at least 14 different subunits, Nqo1 to Nqo14. The complex has a L-shaped structure, with the hydrophobic arm (subunits Nqo7, Nqo8, Nqo10 to Nqo14) embedded in the inner membrane and the hydrophilic peripheral arm (subunits Nqo1 to Nqo6, Nqo9) protruding into the bacterial cytoplasm. The hydrophilic domain contains all the redox centers. It depends on [4Fe-4S] cluster as a cofactor.

The protein resides in the cell inner membrane. The enzyme catalyses a quinone + NADH + 5 H(+)(in) = a quinol + NAD(+) + 4 H(+)(out). Its function is as follows. NDH-1 shuttles electrons from NADH, via FMN and iron-sulfur (Fe-S) centers, to quinones in the respiratory chain. The immediate electron acceptor for the enzyme in this species is believed to be ubiquinone. Couples the redox reaction to proton translocation (for every two electrons transferred, four hydrogen ions are translocated across the cytoplasmic membrane), and thus conserves the redox energy in a proton gradient. The sequence is that of NADH-quinone oxidoreductase subunit 6 (nqo6) from Paracoccus denitrificans.